A 556-amino-acid chain; its full sequence is Genetic interactor of prohibitins 3, mitochondrial (556 aa).

The N-terminal 21 residues, 1–21 (MLNLCHALRGVRQFSCSVIVK), are a transit peptide targeting the mitochondrion. Residues 113-305 (ESTLNDILNY…LFDLPGYSTS (193 aa)) form the CP-type G domain.

This sequence belongs to the TRAFAC class YlqF/YawG GTPase family. GEP3 subfamily.

The protein resides in the mitochondrion. Interacts genetically with prohibitins and thus may be involved in the mitochondrial lipid metabolism. The polypeptide is Genetic interactor of prohibitins 3, mitochondrial (GEP3) (Saccharomyces cerevisiae (strain JAY291) (Baker's yeast)).